Reading from the N-terminus, the 102-residue chain is Large ribosomal subunit protein bL21 (102 aa).

This sequence belongs to the bacterial ribosomal protein bL21 family. Part of the 50S ribosomal subunit. Contacts protein L20.

In terms of biological role, this protein binds to 23S rRNA in the presence of protein L20. The protein is Large ribosomal subunit protein bL21 of Neisseria meningitidis serogroup A / serotype 4A (strain DSM 15465 / Z2491).